Here is a 77-residue protein sequence, read N- to C-terminus: RNA-binding protein Hfq (77 aa).

The region spanning 9-68 is the Sm domain; the sequence is DPFLNALRKEHIPVAIYLVNGIKLQGQIESFDQFVILLKNTVSQMVYKHAISTVVPARAI.

It belongs to the Hfq family. In terms of assembly, homohexamer.

Its function is as follows. RNA chaperone that binds small regulatory RNA (sRNAs) and mRNAs to facilitate mRNA translational regulation in response to envelope stress, environmental stress and changes in metabolite concentrations. Also binds with high specificity to tRNAs. This chain is RNA-binding protein Hfq, found in Psychromonas ingrahamii (strain DSM 17664 / CCUG 51855 / 37).